A 60-amino-acid chain; its full sequence is Mannitol-specific phosphotransferase enzyme IIA component (60 aa).

The region spanning 2 to 60 is the PTS EIIA type-2 domain; that stretch reads SELFSNDNIFLNVNVNSQNEAIEKAGKALVDSGAVTDAYIQVVSTFMGNGLAIPHGTDD. His-56 functions as the Tele-phosphohistidine intermediate in the catalytic mechanism. The residue at position 56 (His-56) is a Phosphohistidine; by HPr.

In terms of assembly, homodimer or homotrimer. Seems to be a monomer when not phosphorylated.

The protein localises to the cytoplasm. Its function is as follows. The phosphoenolpyruvate-dependent sugar phosphotransferase system (sugar PTS), a major carbohydrate active transport system, catalyzes the phosphorylation of incoming sugar substrates concomitantly with their translocation across the cell membrane. The enzyme II CmtAB PTS system is involved in D-mannitol transport. This chain is Mannitol-specific phosphotransferase enzyme IIA component, found in Staphylococcus aureus.